We begin with the raw amino-acid sequence, 437 residues long: Glucose-1-phosphate adenylyltransferase (437 aa).

Alpha-D-glucose 1-phosphate is bound by residues Tyr113, Gly179, 194-195, and Ser212; that span reads EK.

This sequence belongs to the bacterial/plant glucose-1-phosphate adenylyltransferase family. In terms of assembly, homotetramer.

It catalyses the reaction alpha-D-glucose 1-phosphate + ATP + H(+) = ADP-alpha-D-glucose + diphosphate. The protein operates within glycan biosynthesis; glycogen biosynthesis. In terms of biological role, involved in the biosynthesis of ADP-glucose, a building block required for the elongation reactions to produce glycogen. Catalyzes the reaction between ATP and alpha-D-glucose 1-phosphate (G1P) to produce pyrophosphate and ADP-Glc. In Haemophilus influenzae (strain ATCC 51907 / DSM 11121 / KW20 / Rd), this protein is Glucose-1-phosphate adenylyltransferase.